The following is an 830-amino-acid chain: Isethionate sulfite-lyase (830 aa).

Residues 31-700 (KRVFKLLERF…VVSATPNGRV (670 aa)) enclose the PFL domain. 2-hydroxyethane-1-sulfonate is bound by residues arginine 189, glutamine 193, 468–470 (CIE), and arginine 678. Cysteine 468 functions as the Cysteine radical intermediate in the catalytic mechanism. The active-site Proton acceptor is glutamate 470. The 124-residue stretch at 707 to 830 (DGSSPSHGAD…LIARTGHDQM (124 aa)) folds into the Glycine radical domain. Glycine 805 is modified (glycine radical).

This sequence belongs to the glycyl radical enzyme (GRE) family. As to quaternary structure, homodimer. Requires the activating protein IslB to generate the key active site glycyl radical on Gly-805 that is involved in catalysis.

The catalysed reaction is 2-hydroxyethane-1-sulfonate = acetaldehyde + sulfite + H(+). Its pathway is organosulfur degradation; alkanesulfonate degradation. Functionally, involved in an anaerobic respiration pathway that converts the sulfonate taurine (2-aminoethanesulfonate) to ammonia, acetate and sulfide. Catalyzes the radical-mediated C-S bond cleavage of isethionate (2-hydroxyethanesulfonate) to form sulfite and acetaldehyde. Is not able to use any alternate organosulfonate or (S)-1,2-propanediol or choline as a substrate, showing that this enzyme is highly specific for isethionate. The chain is Isethionate sulfite-lyase from Bilophila wadsworthia (strain 3_1_6).